We begin with the raw amino-acid sequence, 55 residues long: Preprotein translocase subunit SecG (55 aa).

Over 1 to 29 the chain is Cytoplasmic; that stretch reads MAKKSGSGLQSSAGLMRYYEADKNAVQVQ. The helical transmembrane segment at 30-51 threads the bilayer; that stretch reads PKVVLIVGAIVGIAVLFLSAVN. Residues 52 to 55 are Extracellular-facing; sequence GFWP.

This sequence belongs to the SEC61-beta family. As to quaternary structure, component of the protein translocase complex. Heterotrimer consisting of alpha (SecY), beta (SecG) and gamma (SecE) subunits. Can form oligomers of the heterotrimer.

It is found in the cell membrane. In terms of biological role, involved in protein export. The function of the beta subunit is unknown, but it may be involved in stabilization of the trimeric complex. The chain is Preprotein translocase subunit SecG from Methanosarcina barkeri (strain Fusaro / DSM 804).